The following is a 267-amino-acid chain: Matrilysin (267 aa).

The N-terminal stretch at 1 to 20 is a signal peptide; that stretch reads MAAMRLTLFRIVCLLPGCLA. The propeptide at 21 to 97 is activation peptide; it reads LPLSQEAGEV…PRCGVPDVAE (77 aa). The Cysteine switch motif lies at 88 to 95; it reads PRCGVPDV. Position 90 (Cys-90) interacts with Zn(2+). Asp-156 lines the Ca(2+) pocket. Zn(2+) contacts are provided by His-166 and Asp-168. Ca(2+)-binding residues include Asp-173, Gly-174, Gly-176, and Thr-178. His-181 serves as a coordination point for Zn(2+). Residues Gly-188, Gly-190, and Asp-192 each coordinate Ca(2+). Residue His-194 participates in Zn(2+) binding. Residues Asp-196 and Glu-199 each coordinate Ca(2+). His-217 contributes to the Zn(2+) binding site. Glu-218 is an active-site residue. Residues His-221 and His-227 each coordinate Zn(2+).

This sequence belongs to the peptidase M10A family. Requires Ca(2+) as cofactor. The cofactor is Zn(2+).

It is found in the secreted. The protein localises to the extracellular space. It localises to the extracellular matrix. The enzyme catalyses Cleavage of 14-Ala-|-Leu-15 and 16-Tyr-|-Leu-17 in B chain of insulin. No action on collagen types I, II, IV, V. Cleaves gelatin chain alpha2(I) &gt; alpha1(I).. Degrades casein, gelatins of types I, III, IV, and V, and fibronectin. Activates procollagenase. This is Matrilysin (Mmp7) from Rattus norvegicus (Rat).